A 120-amino-acid chain; its full sequence is LOB domain-containing protein 8 (120 aa).

Residues 8–109 (RPCCVCITKN…AYLHELEEKI (102 aa)) enclose the LOB domain.

Belongs to the LOB domain-containing protein family.

The sequence is that of LOB domain-containing protein 8 (LBD8) from Arabidopsis thaliana (Mouse-ear cress).